A 464-amino-acid polypeptide reads, in one-letter code: Bifunctional protein GlmU (464 aa).

The tract at residues 1–231 (MDVVIMAAGK…ATQVAGVNSP (231 aa)) is pyrophosphorylase. UDP-N-acetyl-alpha-D-glucosamine is bound by residues lysine 20, glutamine 78, 83–84 (GT), 105–107 (SGD), glycine 142, glutamate 156, and asparagine 229. Aspartate 107 provides a ligand contact to Mg(2+). Asparagine 229 lines the Mg(2+) pocket. A linker region spans residues 232–252 (VQLAALERAFQSKVALQLMEQ). The segment at 253 to 464 (GVRLADPARL…SIANWKRPSK (212 aa)) is N-acetyltransferase. UDP-N-acetyl-alpha-D-glucosamine contacts are provided by arginine 343 and lysine 361. Histidine 373 acts as the Proton acceptor in catalysis. UDP-N-acetyl-alpha-D-glucosamine contacts are provided by tyrosine 376 and asparagine 387. Acetyl-CoA-binding positions include alanine 390, 396–397 (NY), serine 415, glycine 433, and arginine 450.

The protein in the N-terminal section; belongs to the N-acetylglucosamine-1-phosphate uridyltransferase family. This sequence in the C-terminal section; belongs to the transferase hexapeptide repeat family. As to quaternary structure, homotrimer. Mg(2+) is required as a cofactor.

It is found in the cytoplasm. The catalysed reaction is alpha-D-glucosamine 1-phosphate + acetyl-CoA = N-acetyl-alpha-D-glucosamine 1-phosphate + CoA + H(+). The enzyme catalyses N-acetyl-alpha-D-glucosamine 1-phosphate + UTP + H(+) = UDP-N-acetyl-alpha-D-glucosamine + diphosphate. It functions in the pathway nucleotide-sugar biosynthesis; UDP-N-acetyl-alpha-D-glucosamine biosynthesis; N-acetyl-alpha-D-glucosamine 1-phosphate from alpha-D-glucosamine 6-phosphate (route II): step 2/2. Its pathway is nucleotide-sugar biosynthesis; UDP-N-acetyl-alpha-D-glucosamine biosynthesis; UDP-N-acetyl-alpha-D-glucosamine from N-acetyl-alpha-D-glucosamine 1-phosphate: step 1/1. It participates in bacterial outer membrane biogenesis; LPS lipid A biosynthesis. Its function is as follows. Catalyzes the last two sequential reactions in the de novo biosynthetic pathway for UDP-N-acetylglucosamine (UDP-GlcNAc). The C-terminal domain catalyzes the transfer of acetyl group from acetyl coenzyme A to glucosamine-1-phosphate (GlcN-1-P) to produce N-acetylglucosamine-1-phosphate (GlcNAc-1-P), which is converted into UDP-GlcNAc by the transfer of uridine 5-monophosphate (from uridine 5-triphosphate), a reaction catalyzed by the N-terminal domain. The polypeptide is Bifunctional protein GlmU (Albidiferax ferrireducens (strain ATCC BAA-621 / DSM 15236 / T118) (Rhodoferax ferrireducens)).